A 160-amino-acid chain; its full sequence is uncharacterized protein (160 aa).

In terms of domain architecture, N-acetyltransferase spans 5-160 (ISLSFYKPEH…GEQLILHHFL (156 aa)).

This is an uncharacterized protein from Bacillus subtilis (strain 168).